The following is a 307-amino-acid chain: MSMILSASVIRVRDGLPLSASTDYEQSTGMQECRKYFKMLSRKLAQLPDRCTLKTGHYNINFISSLGVSYMMLCTDNYPNVLAFSFLDELQKEFITTYNMMKTNTAVRPYCFIEFDNFIQRTKQRYNNPRSLSTKINLSDMQTEIKLRPPYQISMCELGSANGVTSAFSVDCKGAGKISSAHQRLEPATLSGIVGFILSLLCGALNLIRGFHAIESLLQSDGDDFNYIIAFFLGTAACLYQCYLLVYYTGWRNVKSFLTFGLICLCNMYLYELRNLWQLFFHVTVGAFVTLQIWLRQAQGKAPDYDV.

Serine 2 carries the N-acetylserine modification. Residues serine 2–proline 187 are Cytoplasmic-facing. 2 positions are modified to phosphoserine: serine 6 and serine 8. The 112-residue stretch at serine 8–isoleucine 119 folds into the Longin domain. A helical membrane pass occupies residues alanine 188–isoleucine 208. The Lumenal portion of the chain corresponds to arginine 209 to asparagine 226. A helical transmembrane segment spans residues tyrosine 227–tyrosine 247. The Cytoplasmic portion of the chain corresponds to tyrosine 248–asparagine 253. Residues valine 254–tyrosine 271 traverse the membrane as a helical segment. The Lumenal portion of the chain corresponds to glutamate 272 to arginine 274. Residues asparagine 275–leucine 295 form a helical membrane-spanning segment. Topologically, residues arginine 296 to valine 307 are cytoplasmic.

This sequence belongs to the synaptobrevin family.

Its subcellular location is the endoplasmic reticulum membrane. In terms of biological role, may be involved in vesicle transport between the ER and the Golgi complex. This Macaca fascicularis (Crab-eating macaque) protein is Vesicle-trafficking protein SEC22a (SEC22A).